Here is a 173-residue protein sequence, read N- to C-terminus: Ribosome maturation factor RimM (173 aa).

The PRC barrel domain maps to 98–170 (EDEYYWCDLL…RMTVSLPEGL (73 aa)).

It belongs to the RimM family. In terms of assembly, binds ribosomal protein uS19.

Its subcellular location is the cytoplasm. Functionally, an accessory protein needed during the final step in the assembly of 30S ribosomal subunit, possibly for assembly of the head region. Essential for efficient processing of 16S rRNA. May be needed both before and after RbfA during the maturation of 16S rRNA. It has affinity for free ribosomal 30S subunits but not for 70S ribosomes. The sequence is that of Ribosome maturation factor RimM from Geotalea uraniireducens (strain Rf4) (Geobacter uraniireducens).